The following is a 317-amino-acid chain: Transaldolase (317 aa).

Residue K132 is the Schiff-base intermediate with substrate of the active site.

The protein belongs to the transaldolase family. Type 1 subfamily. Homodimer.

It is found in the cytoplasm. The catalysed reaction is D-sedoheptulose 7-phosphate + D-glyceraldehyde 3-phosphate = D-erythrose 4-phosphate + beta-D-fructose 6-phosphate. It functions in the pathway carbohydrate degradation; pentose phosphate pathway; D-glyceraldehyde 3-phosphate and beta-D-fructose 6-phosphate from D-ribose 5-phosphate and D-xylulose 5-phosphate (non-oxidative stage): step 2/3. Transaldolase is important for the balance of metabolites in the pentose-phosphate pathway. The protein is Transaldolase of Pseudoalteromonas atlantica (strain T6c / ATCC BAA-1087).